A 278-amino-acid polypeptide reads, in one-letter code: 4-diphosphocytidyl-2-C-methyl-D-erythritol kinase (278 aa).

Residue K9 is part of the active site. 89–99 (PVASGIGGGSA) serves as a coordination point for ATP. Residue D128 is part of the active site.

The protein belongs to the GHMP kinase family. IspE subfamily.

It catalyses the reaction 4-CDP-2-C-methyl-D-erythritol + ATP = 4-CDP-2-C-methyl-D-erythritol 2-phosphate + ADP + H(+). It functions in the pathway isoprenoid biosynthesis; isopentenyl diphosphate biosynthesis via DXP pathway; isopentenyl diphosphate from 1-deoxy-D-xylulose 5-phosphate: step 3/6. Its function is as follows. Catalyzes the phosphorylation of the position 2 hydroxy group of 4-diphosphocytidyl-2C-methyl-D-erythritol. The sequence is that of 4-diphosphocytidyl-2-C-methyl-D-erythritol kinase from Cereibacter sphaeroides (strain ATCC 17029 / ATH 2.4.9) (Rhodobacter sphaeroides).